Reading from the N-terminus, the 38-residue chain is Trypsin inhibitor 2 (38 aa).

Gln1 is subject to Pyrrolidone carboxylic acid.

Post-translationally, contains disulfide bonds.

Functionally, inhibits trypsin-like proteases from the guts of the insect pests P.truncatus, P.americana, Acheta sp and Gryllus sp. The sequence is that of Trypsin inhibitor 2 from Opuntia streptacantha (Prickly pear cactus).